Here is a 505-residue protein sequence, read N- to C-terminus: Membrane-bound O-acyltransferase GUP1 (505 aa).

Residues 1-217 lie on the Extracellular side of the membrane; the sequence is MFKAAMDASN…VAPIPLTDYN (217 aa). A helical transmembrane segment spans residues 218–238; it reads FVNYMAYITYAPLFIAGPIIT. Residues 239–266 are Cytoplasmic-facing; the sequence is FNDYIYQSDYKAMSSVKDYKRTFIYFLR. Residues 267–287 traverse the membrane as a helical segment; it reads FAFCILVMEFLLHFMYVVAVS. Over 288–296 the chain is Extracellular; the sequence is KTKAWEGDT. The helical transmembrane segment at 297-317 threads the bilayer; sequence PFQLSMLGLFNLNIIWLKLLI. At 318–377 the chain is on the cytoplasmic side; sequence PWRLFRLWSLIDGIDPPENMIRCMDNNFSTLAFWRAWHRSYNRWIIRYIYIPLGGGGKYR. A run of 2 helical transmembrane segments spans residues 378-398 and 399-419; these read ILNS…ELKL and LMWG…TAIF. The active site involves His392. Topologically, residues 420–430 are cytoplasmic; that stretch reads KNYQHEPWYRH. The helical transmembrane segment at 431–451 threads the bilayer; the sequence is VCALGAVINIWMMMLANLFGF. Residues 452–464 are Extracellular-facing; the sequence is CMGKDGTMSLIKT. A helical transmembrane segment spans residues 465–485; sequence LFTTAVGLRFLFLSLGALFVG. Over 486 to 505 the chain is Cytoplasmic; the sequence is SQVMFELREAEKRRGVNVKC.

This sequence belongs to the membrane-bound acyltransferase family.

The protein resides in the cell membrane. Its subcellular location is the endoplasmic reticulum membrane. It is found in the mitochondrion membrane. Its function is as follows. Membrane-bound O-acyltransferase involved in the remodeling of glycosylphosphatidylinositol (GPI) anchors. Acts only on GPI-anchored proteins, but not on free GPI lipids. Also involved in lipid metabolism, having profound effects on sphingolipid-sterol-ordered domains integrity and assembly. Involved in cell integrity and apoptosis. The polypeptide is Membrane-bound O-acyltransferase GUP1 (GUP1) (Millerozyma farinosa (Yeast)).